We begin with the raw amino-acid sequence, 81 residues long: Acyl carrier protein (81 aa).

One can recognise a Carrier domain in the interval 3–78; the sequence is QEIFDKIKNI…EAVNIIAEKT (76 aa). Ser-38 carries the O-(pantetheine 4'-phosphoryl)serine modification.

This sequence belongs to the acyl carrier protein (ACP) family. Post-translationally, 4'-phosphopantetheine is transferred from CoA to a specific serine of apo-ACP by AcpS. This modification is essential for activity because fatty acids are bound in thioester linkage to the sulfhydryl of the prosthetic group.

It is found in the cytoplasm. Its pathway is lipid metabolism; fatty acid biosynthesis. In terms of biological role, carrier of the growing fatty acid chain in fatty acid biosynthesis. The protein is Acyl carrier protein of Picosynechococcus sp. (strain ATCC 27264 / PCC 7002 / PR-6) (Agmenellum quadruplicatum).